The following is a 279-amino-acid chain: Stathmin domain-containing protein 1 (279 aa).

Disordered regions lie at residues 1–110 (MGCG…ERPK) and 178–254 (AAEE…VAQM). Gly2 carries N-myristoyl glycine lipidation. The segment covering 22–32 (KGWEEGSKADV) has biased composition (basic and acidic residues). Residues 34–45 (VTSSKENCSPQT) are compositionally biased toward polar residues. The SLD domain occupies 121–248 (QGIIQSRSKV…GEPLKRKKSE (128 aa)). 2 stretches are compositionally biased toward basic and acidic residues: residues 178–191 (AAEE…EEIR) and 232–242 (EKSDVQEGEPL).

This is Stathmin domain-containing protein 1 (Stmnd1) from Mus musculus (Mouse).